A 38-amino-acid chain; its full sequence is Photosystem II reaction center protein L (38 aa).

A helical membrane pass occupies residues 17–37; it reads SLYWGLLLIFVLAVSFSNYFF.

It belongs to the PsbL family. As to quaternary structure, PSII is composed of 1 copy each of membrane proteins PsbA, PsbB, PsbC, PsbD, PsbE, PsbF, PsbH, PsbI, PsbJ, PsbK, PsbL, PsbM, PsbT, PsbX, PsbY, PsbZ, Psb30/Ycf12, at least 3 peripheral proteins of the oxygen-evolving complex and a large number of cofactors. It forms dimeric complexes.

It localises to the plastid membrane. One of the components of the core complex of photosystem II (PSII). PSII is a light-driven water:plastoquinone oxidoreductase that uses light energy to abstract electrons from H(2)O, generating O(2) and a proton gradient subsequently used for ATP formation. It consists of a core antenna complex that captures photons, and an electron transfer chain that converts photonic excitation into a charge separation. This subunit is found at the monomer-monomer interface and is required for correct PSII assembly and/or dimerization. The chain is Photosystem II reaction center protein L from Aneura mirabilis (Parasitic liverwort).